The following is a 181-amino-acid chain: Inner membrane-spanning protein YciB (181 aa).

5 consecutive transmembrane segments (helical) span residues 10-30 (LIIF…GALI), 50-70 (MQLI…ALHD), 80-100 (IVYV…KPAI), 120-140 (WAWV…AYHL), and 148-168 (FKVF…GGYI).

The protein belongs to the YciB family.

Its subcellular location is the cell inner membrane. In terms of biological role, plays a role in cell envelope biogenesis, maintenance of cell envelope integrity and membrane homeostasis. In Vibrio cholerae serotype O1 (strain ATCC 39541 / Classical Ogawa 395 / O395), this protein is Inner membrane-spanning protein YciB.